Here is a 170-residue protein sequence, read N- to C-terminus: Archaemetzincin (170 aa).

His-110 contributes to the Zn(2+) binding site. The active-site Proton acceptor is Glu-111. His-114, His-120, Cys-121, Cys-125, Cys-144, and Cys-147 together coordinate Zn(2+).

This sequence belongs to the peptidase M54 family. In terms of assembly, monomer. Requires Zn(2+) as cofactor.

Functionally, probable zinc metalloprotease whose natural substrate is unknown. This is Archaemetzincin from Nanoarchaeum equitans (strain Kin4-M).